A 1118-amino-acid polypeptide reads, in one-letter code: Collagenase ColG (1118 aa).

An N-terminal signal peptide occupies residues 1–45 (MKKNILKILMDSYSKESKIQTVRRVTSVSLLAVYLTMNTSSLVLA). The propeptide occupies 46–110 (KPIENTNDTS…KSKSTLRSAS (65 aa)). Residues 111 to 786 (IANTNSEKYD…QYDVVFHGVL (676 aa)) are S1 metalloprotease domain, degrades both FALGPA (furylacryloyl-Leu-Gly-Pro-Ala) and type I collagen. An activator domain required for full activity on collagen region spans residues 119 to 388 (YDFEYLNGLS…AMERITWDYD (270 aa)). The tract at residues 389 to 670 (GIGSNGKKVD…IQELADKYQG (282 aa)) is catalytic subdomain. The tract at residues 396–1118 (KVDHDKFLDD…SGNYELRVNK (723 aa)) is degrades soluble FALGPA peptide (furylacryloyl-Leu-Gly-Pro-Ala) but not type I collagen. Glutamate 498 lines the Ca(2+) pocket. A Zn(2+)-binding site is contributed by histidine 523. Residue glutamate 524 is part of the active site. Histidine 527 provides a ligand contact to Zn(2+). Residues alanine 531, valine 535, and glycine 537 each contribute to the Ca(2+) site. Glutamate 555 serves as a coordination point for Zn(2+). The segment at 679 to 790 (DYLKDHGYKK…VFHGVLTDNA (112 aa)) is helper subdomain. Residues 787 to 882 (TDNADISNNK…SFTIEIKNED (96 aa)) form an S2 domain region. Ca(2+) is bound by residues asparagine 795, lysine 796, aspartate 823, aspartate 825, aspartate 864, glutamate 890, glutamate 892, asparagine 894, aspartate 913, aspartate 918, alanine 920, aspartate 921, glutamate 1009, glutamate 1011, asparagine 1013, aspartate 1014, serine 1032, aspartate 1037, arginine 1039, and aspartate 1040. Residues 797–885 (APIAKVTGPS…IEIKNEDTTT (89 aa)) enclose the PKD domain. An S3a collagen-binding domain region spans residues 886–1003 (PITKEMEPND…SYSLNIKGLG (118 aa)). The interval 1008–1118 (KEKENNDSSD…SGNYELRVNK (111 aa)) is S3b collagen-binding domain. The collagen-binding stretch occupies residues 1102 to 1106 (LVYKY).

It belongs to the peptidase M9B family. Collagenase subfamily. Ca(2+) serves as cofactor. The cofactor is Zn(2+). Post-translationally, upon purification gives 67 kDa, 78 kDa, 82 kDa and 116 kDa (full-length) proteins all of which have the same N-terminus; only the longest form digests insoluble collagen. At least 2 in vivo isolated forms (C1b and C1c) are missing the second collagen-binding domain, ending on Lys-1006 and Lys-1018 respectively.

The protein localises to the secreted. It carries out the reaction Digestion of native collagen in the triple helical region at Xaa-|-Gly bonds. With synthetic peptides, a preference is shown for Gly at P3 and P1', Pro and Ala at P2 and P2', and hydroxyproline, Ala or Arg at P3'.. Inhibited by 1-10-phenanthroline. Inhibited by peptidomimetic isoamyl-phosphonyl-Gly-Pro-Ala, which binds to Zn(2+). Inhibited by broad-spectrum zinc metalloprotease inhibitor batimastat. N-aryl mercaptoacetamide-based inhibitors have been isolated that act on clostridial collagenases with submicromolar affinity while having negligibile activity on human collagenases. In terms of biological role, clostridial collagenases are among the most efficient degraders of eukaryotic collagen known; saprophytes use collagen as a carbon source while pathogens additionally digest collagen to aid in host colonization. Has both tripeptidylcarboxypeptidase on Gly-X-Y and endopeptidase activities; the endopeptidase cuts within the triple helix region of collagen while tripeptidylcarboxypeptidase successively digests the exposed ends, thus clostridial collagenases can digest large sections of collagen. Active on soluble type I collagen, insoluble collagen, azocoll, soluble PZ-peptide (all collagenase substrates) and gelatin. The full-length protein has collagenase activity, while the in vivo derived C-terminally truncated shorter versions only act on gelatin. In vitro digestion of soluble calf skin collagen fibrils requires both ColG and ColH; ColG forms missing the second collagen-binding domain are also synergistic with ColH, although their overall efficiency is decreased. The activator domain (residues 119-388) and catalytic subdomain (389-670) open and close around substrate using a Gly-rich hinge (387-397), allowing digestion when the protein is closed. Binding of collagen requires Ca(2+) and is inhibited by EGTA; the collagen-binding domain (CBD, S3a plus S3b) specifically recognizes the triple-helical conformation made by 3 collagen protein chains in the triple-helical region. Isolated CBD (S3a plus S3b) binds collagen fibrils and sheets of many tissues. This chain is Collagenase ColG, found in Hathewaya histolytica (Clostridium histolyticum).